The primary structure comprises 116 residues: ANWCEPGLVIPLNPLPSCRTYMVRRACGVSIGPVVPLPVLKERCCSELEKLVPYCRCGALRTALDSMMTGYEMRPTCSWGGLLTFAPTIVCYRECNLRTLHGRPFCYALGAEGTTT.

5 disulfide bridges follow: cysteine 4–cysteine 55, cysteine 18–cysteine 44, cysteine 27–cysteine 77, cysteine 45–cysteine 95, and cysteine 57–cysteine 106.

This sequence belongs to the protease inhibitor I6 (cereal trypsin/alpha-amylase inhibitor) family.

It is found in the secreted. Functionally, alpha-amylase inhibitor. The protein is Alpha-amylase inhibitor 5 of Sorghum bicolor (Sorghum).